Reading from the N-terminus, the 372-residue chain is D-alanine--D-alanine ligase (372 aa).

The 205-residue stretch at 145 to 349 (KTVLRAGGIP…CPNLLDQLIE (205 aa)) folds into the ATP-grasp domain. Position 176 to 231 (176 to 231 (DRWGTSELFVKAVSLGSSVATLPVKTETEFTKAVKEVFRYDDRLMVEPRIRGREIE)) interacts with ATP. Mg(2+) is bound by residues aspartate 303, glutamate 316, and asparagine 318.

Belongs to the D-alanine--D-alanine ligase family. Mg(2+) is required as a cofactor. Requires Mn(2+) as cofactor.

It is found in the cytoplasm. It carries out the reaction 2 D-alanine + ATP = D-alanyl-D-alanine + ADP + phosphate + H(+). Its pathway is cell wall biogenesis; peptidoglycan biosynthesis. In terms of biological role, cell wall formation. The chain is D-alanine--D-alanine ligase from Coxiella burnetii (strain CbuK_Q154) (Coxiella burnetii (strain Q154)).